A 151-amino-acid polypeptide reads, in one-letter code: Large ribosomal subunit protein uL13 (151 aa).

The tract at residues 126 to 151 (YPGPNHPHQAQKPEELTLNTIPNGDK) is disordered. Positions 142 to 151 (TLNTIPNGDK) are enriched in polar residues.

It belongs to the universal ribosomal protein uL13 family. As to quaternary structure, part of the 50S ribosomal subunit.

Its function is as follows. This protein is one of the early assembly proteins of the 50S ribosomal subunit, although it is not seen to bind rRNA by itself. It is important during the early stages of 50S assembly. The chain is Large ribosomal subunit protein uL13 from Crocosphaera subtropica (strain ATCC 51142 / BH68) (Cyanothece sp. (strain ATCC 51142)).